The sequence spans 325 residues: Ribosomal RNA small subunit methyltransferase H (325 aa).

Residues 32–34 (GGH), Asp52, Phe79, Asp100, and Gln107 contribute to the S-adenosyl-L-methionine site.

The protein belongs to the methyltransferase superfamily. RsmH family.

The protein resides in the cytoplasm. It carries out the reaction cytidine(1402) in 16S rRNA + S-adenosyl-L-methionine = N(4)-methylcytidine(1402) in 16S rRNA + S-adenosyl-L-homocysteine + H(+). In terms of biological role, specifically methylates the N4 position of cytidine in position 1402 (C1402) of 16S rRNA. This chain is Ribosomal RNA small subunit methyltransferase H, found in Oceanobacillus iheyensis (strain DSM 14371 / CIP 107618 / JCM 11309 / KCTC 3954 / HTE831).